The chain runs to 2443 residues: Spatacsin (2443 aa).

Position 1955 is a phosphoserine (Ser1955).

Interacts with AP5Z1, AP5B1, AP5S1 and ZFYVE26. In terms of tissue distribution, expressed in all structures of brain, with a high expression in cerebellum. Expressed in cortical projection neurons.

It is found in the cytoplasm. It localises to the cytosol. Its subcellular location is the nucleus. The protein localises to the cell projection. The protein resides in the axon. It is found in the dendrite. May play a role in neurite plasticity by maintaining cytoskeleton stability and regulating synaptic vesicle transport. This is Spatacsin (SPG11) from Homo sapiens (Human).